The chain runs to 422 residues: Inositol phosphorylceramide synthase catalytic subunit aur1 (422 aa).

Topologically, residues M1–Y47 are cytoplasmic. 2 helical membrane-spanning segments follow: residues V48 to G68 and K69 to T85. The Cytoplasmic segment spans residues R86 to Q87. The helical transmembrane segment at I88–I108 threads the bilayer. Topologically, residues P109–S159 are lumenal. The N-linked (GlcNAc...) asparagine glycan is linked to N132. A helical transmembrane segment spans residues A160–W180. Topologically, residues A181–T183 are cytoplasmic. Residues F184–W204 form a helical membrane-spanning segment. The Lumenal portion of the chain corresponds to Y205–P245. Residues V246–L266 form a helical membrane-spanning segment. Residues S267–R274 lie on the Cytoplasmic side of the membrane. A run of 2 helical transmembrane segments spans residues F275–T292 and H293–A313. The Cytoplasmic segment spans residues Q314–P422. A Phosphoserine modification is found at S353. Positions E386–D406 are disordered.

It belongs to the AUR1 family. In terms of assembly, component of the inositol phosphorylceramide synthase complex composed of at least aur1 and kei1.

It localises to the golgi apparatus. The protein localises to the golgi stack membrane. With respect to regulation, inhibited by aureobasidin A (AbA). In terms of biological role, catalytic component of the inositol phosphorylceramide synthase which catalyzes the addition of a phosphorylinositol group onto ceramide to form inositol phosphorylceramide, an essential step in sphingolipid biosynthesis. This Schizosaccharomyces pombe (strain 972 / ATCC 24843) (Fission yeast) protein is Inositol phosphorylceramide synthase catalytic subunit aur1 (aur1).